The following is a 263-amino-acid chain: uncharacterized protein (263 aa).

Position 12-19 (12-19) interacts with ATP; the sequence is KGGVGKTT.

It belongs to the ParA family. MinD subfamily.

This is an uncharacterized protein from Methanocaldococcus jannaschii (strain ATCC 43067 / DSM 2661 / JAL-1 / JCM 10045 / NBRC 100440) (Methanococcus jannaschii).